Reading from the N-terminus, the 116-residue chain is Large ribosomal subunit protein uL18 (116 aa).

The protein belongs to the universal ribosomal protein uL18 family. In terms of assembly, part of the 50S ribosomal subunit; part of the 5S rRNA/L5/L18/L25 subcomplex. Contacts the 5S and 23S rRNAs.

In terms of biological role, this is one of the proteins that bind and probably mediate the attachment of the 5S RNA into the large ribosomal subunit, where it forms part of the central protuberance. The protein is Large ribosomal subunit protein uL18 of Mycoplasma pneumoniae (strain ATCC 29342 / M129 / Subtype 1) (Mycoplasmoides pneumoniae).